The primary structure comprises 283 residues: Syntaxin VAM3 (283 aa).

Residues 1–26 are disordered; the sequence is MSFFDIEAQSSKGNSQQEPQFSTNQK. The Cytoplasmic segment spans residues 1–261; sequence MSFFDIEAQS…ADQHQRDRNK (261 aa). The span at 8–25 shows a compositional bias: polar residues; the sequence is AQSSKGNSQQEPQFSTNQ. 2 coiled-coil regions span residues 28-48 and 84-111; these read KELSNLIETFAEQSRVLEKEC and LIHQNGKLSADFKNLKTKYQSLQQSYNQ. Disordered stretches follow at residues 116–146 and 162–182; these read FPLKTPISPGTSKERKDIHPRTEAVRQDPES and NEGQHQLQLQEEQEQQQQGLS. Positions 127-144 are enriched in basic and acidic residues; sequence SKERKDIHPRTEAVRQDP. Residues 169 to 189 are a coiled coil; it reads QLQEEQEQQQQGLSQEELDFQ. Positions 190-252 constitute a t-SNARE coiled-coil homology domain; it reads TIIHQERSQQ…QNANKQLTRA (63 aa). A helical; Anchor for type IV membrane protein membrane pass occupies residues 262–282; the sequence is CGKVTLIIIIVVCMVVLLAVL. Residue serine 283 is a topological domain, vacuolar.

Belongs to the syntaxin family. Associates with VAM7.

It is found in the vacuole membrane. Required for vacuolar assembly. Provides the t-SNARE function in a late step of the vacuolar assembly. Required for homotypic vacuole membrane fusion, autophagy and fusion of biosynthetic transport vesicles with the vacuole. Required for the delivery of alpha-factor receptor-ligand complexes to the vacuole. The protein is Syntaxin VAM3 (VAM3) of Saccharomyces cerevisiae (strain ATCC 204508 / S288c) (Baker's yeast).